Consider the following 1394-residue polypeptide: DNA-directed RNA polymerase subunit beta (1394 aa).

This sequence belongs to the RNA polymerase beta chain family. In terms of assembly, the RNAP catalytic core consists of 2 alpha, 1 beta, 1 beta' and 1 omega subunit. When a sigma factor is associated with the core the holoenzyme is formed, which can initiate transcription.

It carries out the reaction RNA(n) + a ribonucleoside 5'-triphosphate = RNA(n+1) + diphosphate. DNA-dependent RNA polymerase catalyzes the transcription of DNA into RNA using the four ribonucleoside triphosphates as substrates. This is DNA-directed RNA polymerase subunit beta from Anaplasma phagocytophilum (Ehrlichia phagocytophila).